Here is a 103-residue protein sequence, read N- to C-terminus: Enhancer of rudimentary homolog (103 aa).

The protein belongs to the E(R) family. As to quaternary structure, homodimer.

May have a role in the cell cycle. The sequence is that of Enhancer of rudimentary homolog from Caenorhabditis elegans.